A 155-amino-acid polypeptide reads, in one-letter code: Small ribosomal subunit protein uS7cz/uS7cy (155 aa).

The protein belongs to the universal ribosomal protein uS7 family. Part of the 30S ribosomal subunit.

Its subcellular location is the plastid. The protein localises to the chloroplast. Its function is as follows. One of the primary rRNA binding proteins, it binds directly to 16S rRNA where it nucleates assembly of the head domain of the 30S subunit. The chain is Small ribosomal subunit protein uS7cz/uS7cy (rps7-A) from Pelargonium hortorum (Common geranium).